We begin with the raw amino-acid sequence, 44 residues long: Large ribosomal subunit protein bL34 (44 aa).

The interval 21 to 44 is disordered; it reads RMDTSGGRRILSARRRKGRKTISA. The span at 31-44 shows a compositional bias: basic residues; that stretch reads LSARRRKGRKTISA.

Belongs to the bacterial ribosomal protein bL34 family.

The polypeptide is Large ribosomal subunit protein bL34 (Endomicrobium trichonymphae).